A 128-amino-acid chain; its full sequence is Ribonuclease pancreatic (128 aa).

Over residues 1 to 13 the composition is skewed to basic and acidic residues; it reads GESRAEKFQRQHM. Residues 1–24 form a disordered region; sequence GESRAEKFQRQHMDSGSSPSSSST. Substrate is bound by residues Lys-7 and Arg-10. Residue His-12 is the Proton acceptor of the active site. Disulfide bonds link Cys-26/Cys-84, Cys-40/Cys-95, Cys-58/Cys-110, and Cys-65/Cys-72. Asn-34 carries N-linked (GlcNAc...) asparagine glycosylation. Substrate contacts are provided by residues 41 to 45, Lys-66, and Arg-85; that span reads KSVNT. His-119 acts as the Proton donor in catalysis.

The protein belongs to the pancreatic ribonuclease family. As to quaternary structure, monomer. Interacts with and forms tight 1:1 complexes with RNH1. Dimerization of two such complexes may occur. Interaction with RNH1 inhibits this protein. Pancreas and other tissues and body fluids (indicating it may have other physiological functions besides its role in digestion).

It is found in the secreted. The enzyme catalyses an [RNA] containing cytidine + H2O = an [RNA]-3'-cytidine-3'-phosphate + a 5'-hydroxy-ribonucleotide-3'-[RNA].. It catalyses the reaction an [RNA] containing uridine + H2O = an [RNA]-3'-uridine-3'-phosphate + a 5'-hydroxy-ribonucleotide-3'-[RNA].. In terms of biological role, endonuclease that catalyzes the cleavage of RNA on the 3' side of pyrimidine nucleotides. Acts on single-stranded and double-stranded RNA. The sequence is that of Ribonuclease pancreatic (RNASE1) from Semnopithecus entellus (Northern plains gray langur).